A 282-amino-acid polypeptide reads, in one-letter code: 4-diphosphocytidyl-2-C-methyl-D-erythritol kinase (282 aa).

Lysine 13 is a catalytic residue. Proline 96 to serine 106 is an ATP binding site. The active site involves aspartate 138.

The protein belongs to the GHMP kinase family. IspE subfamily.

It carries out the reaction 4-CDP-2-C-methyl-D-erythritol + ATP = 4-CDP-2-C-methyl-D-erythritol 2-phosphate + ADP + H(+). It participates in isoprenoid biosynthesis; isopentenyl diphosphate biosynthesis via DXP pathway; isopentenyl diphosphate from 1-deoxy-D-xylulose 5-phosphate: step 3/6. Functionally, catalyzes the phosphorylation of the position 2 hydroxy group of 4-diphosphocytidyl-2C-methyl-D-erythritol. The chain is 4-diphosphocytidyl-2-C-methyl-D-erythritol kinase from Pseudomonas syringae pv. syringae (strain B728a).